Reading from the N-terminus, the 403-residue chain is Argininosuccinate synthase (403 aa).

ATP-binding positions include 10-18 (AYSGGVDTS) and Ala-38. Tyr-89 serves as a coordination point for L-citrulline. Gly-119 contacts ATP. 3 residues coordinate L-aspartate: Thr-121, Asn-125, and Asp-126. Position 125 (Asn-125) interacts with L-citrulline. Positions 129, 177, 186, 262, and 274 each coordinate L-citrulline.

The protein belongs to the argininosuccinate synthase family. Type 1 subfamily. As to quaternary structure, homotetramer.

The protein resides in the cytoplasm. It carries out the reaction L-citrulline + L-aspartate + ATP = 2-(N(omega)-L-arginino)succinate + AMP + diphosphate + H(+). The protein operates within amino-acid biosynthesis; L-arginine biosynthesis; L-arginine from L-ornithine and carbamoyl phosphate: step 2/3. The sequence is that of Argininosuccinate synthase from Synechococcus sp. (strain CC9605).